Reading from the N-terminus, the 239-residue chain is Probable transcriptional regulatory protein BCAH187_A0615 (239 aa).

This sequence belongs to the TACO1 family. YeeN subfamily.

Its subcellular location is the cytoplasm. This chain is Probable transcriptional regulatory protein BCAH187_A0615, found in Bacillus cereus (strain AH187).